The following is a 418-amino-acid chain: L-rhamnose isomerase (418 aa).

Mn(2+)-binding residues include His261, Asp293, and Asp295.

The protein belongs to the rhamnose isomerase family. It depends on Mn(2+) as a cofactor.

It localises to the cytoplasm. The enzyme catalyses L-rhamnopyranose = L-rhamnulose. It functions in the pathway carbohydrate degradation; L-rhamnose degradation; glycerone phosphate from L-rhamnose: step 1/3. Its function is as follows. Catalyzes the interconversion of L-rhamnose and L-rhamnulose. The sequence is that of L-rhamnose isomerase from Clostridium beijerinckii (strain ATCC 51743 / NCIMB 8052) (Clostridium acetobutylicum).